Here is a 424-residue protein sequence, read N- to C-terminus: Histidine--tRNA ligase (424 aa).

Belongs to the class-II aminoacyl-tRNA synthetase family. In terms of assembly, homodimer.

It is found in the cytoplasm. It carries out the reaction tRNA(His) + L-histidine + ATP = L-histidyl-tRNA(His) + AMP + diphosphate + H(+). In Francisella philomiragia subsp. philomiragia (strain ATCC 25017 / CCUG 19701 / FSC 153 / O#319-036), this protein is Histidine--tRNA ligase.